Consider the following 499-residue polypeptide: Bifunctional purine biosynthesis protein PurH (499 aa).

Residues 1-144 (MIKRALISVF…KNFKDVVVLT (144 aa)) enclose the MGS-like domain.

This sequence belongs to the PurH family.

It carries out the reaction (6R)-10-formyltetrahydrofolate + 5-amino-1-(5-phospho-beta-D-ribosyl)imidazole-4-carboxamide = 5-formamido-1-(5-phospho-D-ribosyl)imidazole-4-carboxamide + (6S)-5,6,7,8-tetrahydrofolate. The enzyme catalyses IMP + H2O = 5-formamido-1-(5-phospho-D-ribosyl)imidazole-4-carboxamide. It functions in the pathway purine metabolism; IMP biosynthesis via de novo pathway; 5-formamido-1-(5-phospho-D-ribosyl)imidazole-4-carboxamide from 5-amino-1-(5-phospho-D-ribosyl)imidazole-4-carboxamide (10-formyl THF route): step 1/1. Its pathway is purine metabolism; IMP biosynthesis via de novo pathway; IMP from 5-formamido-1-(5-phospho-D-ribosyl)imidazole-4-carboxamide: step 1/1. The protein is Bifunctional purine biosynthesis protein PurH of Clostridium botulinum (strain Loch Maree / Type A3).